Here is a 323-residue protein sequence, read N- to C-terminus: Prenyl transferase (323 aa).

Isopentenyl diphosphate contacts are provided by Lys-46, Arg-49, and His-81. Mg(2+) contacts are provided by Asp-88 and Asp-92. Arg-97 is an an all-trans-polyprenyl diphosphate binding site. Residue Arg-98 coordinates isopentenyl diphosphate. The an all-trans-polyprenyl diphosphate site is built by Lys-174, Thr-175, and Gln-212.

This sequence belongs to the FPP/GGPP synthase family. The cofactor is Mg(2+).

It localises to the plastid. It is found in the cyanelle. Possible role in synthesis of the nonaprenyl side chain of plastoquinone or in synthesis of other prenyl chains such as undekaprenyl pyrophosphate. This is Prenyl transferase (preA) from Cyanophora paradoxa.